The following is a 197-amino-acid chain: 3-isopropylmalate dehydratase small subunit (197 aa).

It belongs to the LeuD family. LeuD type 1 subfamily. As to quaternary structure, heterodimer of LeuC and LeuD.

It catalyses the reaction (2R,3S)-3-isopropylmalate = (2S)-2-isopropylmalate. The protein operates within amino-acid biosynthesis; L-leucine biosynthesis; L-leucine from 3-methyl-2-oxobutanoate: step 2/4. In terms of biological role, catalyzes the isomerization between 2-isopropylmalate and 3-isopropylmalate, via the formation of 2-isopropylmaleate. This is 3-isopropylmalate dehydratase small subunit from Corynebacterium glutamicum (strain R).